Here is a 453-residue protein sequence, read N- to C-terminus: Phosphoglucosamine mutase (453 aa).

Serine 102 functions as the Phosphoserine intermediate in the catalytic mechanism. Residues serine 102, aspartate 243, aspartate 245, and aspartate 247 each contribute to the Mg(2+) site. A Phosphoserine modification is found at serine 102.

It belongs to the phosphohexose mutase family. Mg(2+) serves as cofactor. In terms of processing, activated by phosphorylation.

The catalysed reaction is alpha-D-glucosamine 1-phosphate = D-glucosamine 6-phosphate. In terms of biological role, catalyzes the conversion of glucosamine-6-phosphate to glucosamine-1-phosphate. The polypeptide is Phosphoglucosamine mutase (Bartonella tribocorum (strain CIP 105476 / IBS 506)).